Reading from the N-terminus, the 492-residue chain is Probable cytosol aminopeptidase (492 aa).

2 residues coordinate Mn(2+): lysine 259 and aspartate 264. Residue lysine 271 is part of the active site. Positions 283, 342, and 344 each coordinate Mn(2+). Arginine 346 is a catalytic residue.

Belongs to the peptidase M17 family. Mn(2+) is required as a cofactor.

Its subcellular location is the cytoplasm. It carries out the reaction Release of an N-terminal amino acid, Xaa-|-Yaa-, in which Xaa is preferably Leu, but may be other amino acids including Pro although not Arg or Lys, and Yaa may be Pro. Amino acid amides and methyl esters are also readily hydrolyzed, but rates on arylamides are exceedingly low.. The catalysed reaction is Release of an N-terminal amino acid, preferentially leucine, but not glutamic or aspartic acids.. Functionally, presumably involved in the processing and regular turnover of intracellular proteins. Catalyzes the removal of unsubstituted N-terminal amino acids from various peptides. The polypeptide is Probable cytosol aminopeptidase (pepA) (Synechocystis sp. (strain ATCC 27184 / PCC 6803 / Kazusa)).